The sequence spans 76 residues: MAEQPTFEQNLSQLETIVNQLEQGDVPLEQALDQFQKGVALSKQLQATLEGAEKTLTKMMNENGDEVPFEQADANE.

It belongs to the XseB family. Heterooligomer composed of large and small subunits.

The protein localises to the cytoplasm. The catalysed reaction is Exonucleolytic cleavage in either 5'- to 3'- or 3'- to 5'-direction to yield nucleoside 5'-phosphates.. Bidirectionally degrades single-stranded DNA into large acid-insoluble oligonucleotides, which are then degraded further into small acid-soluble oligonucleotides. This Lactiplantibacillus plantarum (strain ATCC BAA-793 / NCIMB 8826 / WCFS1) (Lactobacillus plantarum) protein is Exodeoxyribonuclease 7 small subunit.